The following is a 98-amino-acid chain: UPF0235 protein Ping_3043 (98 aa).

The protein belongs to the UPF0235 family.

The polypeptide is UPF0235 protein Ping_3043 (Psychromonas ingrahamii (strain DSM 17664 / CCUG 51855 / 37)).